The primary structure comprises 415 residues: ATP-dependent Clp protease ATP-binding subunit ClpX (415 aa).

The ClpX-type ZB domain occupies 1–53 (MLRSKGDLVLGCSFCGKKEDERRRIVTGHGVSICNYCVERCAEYLRDRKPSAL). Residues cysteine 12, cysteine 15, cysteine 34, and cysteine 37 each coordinate Zn(2+). 118–125 (PTGSGKTL) is an ATP binding site.

This sequence belongs to the ClpX chaperone family. Component of the ClpX-ClpP complex. Forms a hexameric ring that, in the presence of ATP, binds to fourteen ClpP subunits assembled into a disk-like structure with a central cavity, resembling the structure of eukaryotic proteasomes.

Its function is as follows. ATP-dependent specificity component of the Clp protease. It directs the protease to specific substrates. Can perform chaperone functions in the absence of ClpP. This chain is ATP-dependent Clp protease ATP-binding subunit ClpX, found in Treponema pallidum (strain Nichols).